Consider the following 340-residue polypeptide: Beta-ketoacyl-[acyl-carrier-protein] synthase III (340 aa).

Active-site residues include Cys122 and His260. Positions 261–265 (QANTR) are ACP-binding. Residue Asn291 is part of the active site.

This sequence belongs to the thiolase-like superfamily. FabH family. In terms of assembly, homodimer.

It localises to the cytoplasm. The enzyme catalyses malonyl-[ACP] + acetyl-CoA + H(+) = 3-oxobutanoyl-[ACP] + CO2 + CoA. It participates in lipid metabolism; fatty acid biosynthesis. Catalyzes the condensation reaction of fatty acid synthesis by the addition to an acyl acceptor of two carbons from malonyl-ACP. Catalyzes the first condensation reaction which initiates fatty acid synthesis and may therefore play a role in governing the total rate of fatty acid production. Possesses both acetoacetyl-ACP synthase and acetyl transacylase activities. Its substrate specificity determines the biosynthesis of branched-chain and/or straight-chain of fatty acids. This chain is Beta-ketoacyl-[acyl-carrier-protein] synthase III, found in Mycobacteroides abscessus (strain ATCC 19977 / DSM 44196 / CCUG 20993 / CIP 104536 / JCM 13569 / NCTC 13031 / TMC 1543 / L948) (Mycobacterium abscessus).